Consider the following 63-residue polypeptide: MNFSRILFFMFACFVALASVSAVPEPRWKVFKKIEKVGRHIRDGVIKAGPAITVVGQATALGK.

The N-terminal stretch at 1–22 (MNFSRILFFMFACFVALASVSA) is a signal peptide. The propeptide at 23-26 (VPEP) is removed by a dipeptidylpeptidase. Leu61 carries the leucine amide modification.

Belongs to the cecropin family.

The protein localises to the secreted. Has antibacterial activity. This is Hyphancin-3G from Hyphantria cunea (Fall webworm moth).